A 466-amino-acid chain; its full sequence is 3-isopropylmalate dehydratase large subunit (466 aa).

[4Fe-4S] cluster-binding residues include cysteine 347, cysteine 407, and cysteine 410.

This sequence belongs to the aconitase/IPM isomerase family. LeuC type 1 subfamily. As to quaternary structure, heterodimer of LeuC and LeuD. It depends on [4Fe-4S] cluster as a cofactor.

The enzyme catalyses (2R,3S)-3-isopropylmalate = (2S)-2-isopropylmalate. It participates in amino-acid biosynthesis; L-leucine biosynthesis; L-leucine from 3-methyl-2-oxobutanoate: step 2/4. Catalyzes the isomerization between 2-isopropylmalate and 3-isopropylmalate, via the formation of 2-isopropylmaleate. The polypeptide is 3-isopropylmalate dehydratase large subunit (Shigella boydii serotype 4 (strain Sb227)).